Here is a 233-residue protein sequence, read N- to C-terminus: MAAAAVDPMVLGLGTSGGASGSGVVGGGVGRAGGGGAVMEGAQPVDLARHPSGIVPVLQNIVSTVNLDCRLDLKQIALQARNAEYNPKRFAAVIMRIRDPKTTALIFASGKMVCTGAKSEEHSKLAARKYARIVQKLGFPATFKDFKIQNIVASCDVKFPIRLEGLAYSHGAFSSYEPELFPGLIYRMKQPKIVLLVFVSGKIVLTGAKVRDEIYAAFENIYPVLTEYRKSQQ.

2 consecutive repeat copies span residues 58 to 134 (LQNI…ARIV) and 148 to 225 (IQNI…YPVL).

The protein belongs to the TBP family. Belongs to the TFIID complex together with the TBP-associated factors (TAFs). Binds DNA as monomer.

The protein localises to the nucleus. Functionally, general transcription factor that functions at the core of the DNA-binding multiprotein factor TFIID. Binding of TFIID to the TATA box is the initial transcriptional step of the pre-initiation complex (PIC), playing a role in the activation of eukaryotic genes transcribed by RNA polymerase II. The polypeptide is TATA-box-binding protein 1 (TBP1) (Triticum aestivum (Wheat)).